The chain runs to 1345 residues: DNA-directed RNA polymerase subunit beta' (1345 aa).

The Zn(2+) site is built by Cys-60, Cys-62, Cys-75, and Cys-78. Positions 536, 538, and 540 each coordinate Mg(2+). Zn(2+)-binding residues include Cys-895, Cys-974, Cys-981, and Cys-984.

Belongs to the RNA polymerase beta' chain family. In terms of assembly, the RNAP catalytic core consists of 2 alpha, 1 beta, 1 beta' and 1 omega subunit. When a sigma factor is associated with the core the holoenzyme is formed, which can initiate transcription. It depends on Mg(2+) as a cofactor. Requires Zn(2+) as cofactor.

It catalyses the reaction RNA(n) + a ribonucleoside 5'-triphosphate = RNA(n+1) + diphosphate. Functionally, DNA-dependent RNA polymerase catalyzes the transcription of DNA into RNA using the four ribonucleoside triphosphates as substrates. This chain is DNA-directed RNA polymerase subunit beta', found in Bifidobacterium longum (strain DJO10A).